A 120-amino-acid chain; its full sequence is MPRVKRGVTARARHKKVLALSKGFRGRRGNVFRIAKQAVMKAGQYAYRDRRTKKRVFRQLWIARINAASRELGLTYSQFTNGLKKAAIEIDRKMLADLAVHDKAAFGSIVEQVKAKLAAA.

Belongs to the bacterial ribosomal protein bL20 family.

Binds directly to 23S ribosomal RNA and is necessary for the in vitro assembly process of the 50S ribosomal subunit. It is not involved in the protein synthesizing functions of that subunit. The sequence is that of Large ribosomal subunit protein bL20 from Paracidovorax citrulli (strain AAC00-1) (Acidovorax citrulli).